The following is a 420-amino-acid chain: UDP-N-acetylglucosamine 1-carboxyvinyltransferase (420 aa).

22–23 (KN) lines the phosphoenolpyruvate pocket. UDP-N-acetyl-alpha-D-glucosamine is bound at residue R93. Catalysis depends on C117, which acts as the Proton donor. C117 is subject to 2-(S-cysteinyl)pyruvic acid O-phosphothioketal. Residues 122 to 126 (RPVDL), D307, and V329 contribute to the UDP-N-acetyl-alpha-D-glucosamine site.

This sequence belongs to the EPSP synthase family. MurA subfamily.

Its subcellular location is the cytoplasm. It catalyses the reaction phosphoenolpyruvate + UDP-N-acetyl-alpha-D-glucosamine = UDP-N-acetyl-3-O-(1-carboxyvinyl)-alpha-D-glucosamine + phosphate. It functions in the pathway cell wall biogenesis; peptidoglycan biosynthesis. Functionally, cell wall formation. Adds enolpyruvyl to UDP-N-acetylglucosamine. The sequence is that of UDP-N-acetylglucosamine 1-carboxyvinyltransferase from Hahella chejuensis (strain KCTC 2396).